The primary structure comprises 620 residues: Translation initiation factor IF-2 (620 aa).

The 170-residue stretch at 119–288 folds into the tr-type G domain; sequence ERPPIVTIMG…IILISELENL (170 aa). A G1 region spans residues 128–135; that stretch reads GHVDHGKT. 128-135 contributes to the GTP binding site; it reads GHVDHGKT. The segment at 153 to 157 is G2; the sequence is GITQA. The tract at residues 175-178 is G3; the sequence is DTPG. Residues 175 to 179 and 229 to 232 contribute to the GTP site; these read DTPGH and NKID. The G4 stretch occupies residues 229 to 232; sequence NKID. A G5 region spans residues 265–267; it reads SAI.

It belongs to the TRAFAC class translation factor GTPase superfamily. Classic translation factor GTPase family. IF-2 subfamily.

The protein resides in the cytoplasm. Its function is as follows. One of the essential components for the initiation of protein synthesis. Protects formylmethionyl-tRNA from spontaneous hydrolysis and promotes its binding to the 30S ribosomal subunits. Also involved in the hydrolysis of GTP during the formation of the 70S ribosomal complex. The sequence is that of Translation initiation factor IF-2 from Mycoplasma capricolum subsp. capricolum (strain California kid / ATCC 27343 / NCTC 10154).